A 253-amino-acid chain; its full sequence is Salivary gland SP38-40.B protein (253 aa).

Residues 1–21 (MRIKFLVVLAVICLLAHYASA) form the signal peptide. 3 disordered regions span residues 23–51 (GMGGDKKPKDAPKPKDAPKPKEVKPVKAD), 140–168 (KDEKKEKKVVKVIKPPKEKPPKKPRKECS), and 203–253 (VQGK…DAKK). 2 stretches are compositionally biased toward basic and acidic residues: residues 26-51 (GDKKPKDAPKPKDAPKPKEVKPVKAD) and 154-168 (PPKEKPPKKPRKECS). Repeat copies occupy residues 29-34 (KPKDAP) and 35-40 (KPKDAP). The segment at 29–47 (KPKDAPKPKDAPKPKEVKP) is 3 X 6 AA approximate tandem repeats of K-P-K-D-A-P. Residues 41–47 (KPKEVKP) form a 1-3; approximate repeat. Repeat copies occupy residues 153–156 (KPPK) and 158–161 (KPPK). Positions 153–166 (KPPKEKPPKKPRKE) are 3 X 4 AA approximate tandem repeats of K-P-P-K. The 2-3; approximate repeat unit spans residues 162 to 166 (KPRKE). A compositionally biased stretch (basic residues) spans 206–217 (KQKKGAKKAKGG). 6 repeat units span residues 222-225 (PKPG), 226-229 (PKPA), 230-233 (PKPG), 234-237 (PKPA), 238-241 (PKPV), and 242-245 (PKPA). Positions 222–249 (PKPGPKPAPKPGPKPAPKPVPKPADKPK) are 7 X 4 AA approximate tandem repeats of P-K-P-[GAV]. Positions 225–243 (GPKPAPKPGPKPAPKPVPK) are enriched in pro residues. Residues 244–253 (PADKPKDAKK) are compositionally biased toward basic and acidic residues. The 3-7; approximate repeat unit spans residues 246 to 249 (DKPK).

In terms of tissue distribution, salivary gland.

The protein localises to the secreted. Used by the larvae to construct a supramolecular structure, the larval tube. This chain is Salivary gland SP38-40.B protein (SP38-40.B), found in Chironomus tentans (Midge).